Reading from the N-terminus, the 327-residue chain is Tetraacyldisaccharide 4'-kinase (327 aa).

Residue 58-65 coordinates ATP; the sequence is TVGGTGKT.

This sequence belongs to the LpxK family.

The enzyme catalyses a lipid A disaccharide + ATP = a lipid IVA + ADP + H(+). The protein operates within glycolipid biosynthesis; lipid IV(A) biosynthesis; lipid IV(A) from (3R)-3-hydroxytetradecanoyl-[acyl-carrier-protein] and UDP-N-acetyl-alpha-D-glucosamine: step 6/6. Transfers the gamma-phosphate of ATP to the 4'-position of a tetraacyldisaccharide 1-phosphate intermediate (termed DS-1-P) to form tetraacyldisaccharide 1,4'-bis-phosphate (lipid IVA). This Alcanivorax borkumensis (strain ATCC 700651 / DSM 11573 / NCIMB 13689 / SK2) protein is Tetraacyldisaccharide 4'-kinase.